Reading from the N-terminus, the 1246-residue chain is MMETERLVLPPPDPLDLPLRAVELGCTGHWELLNLPGAPESSLPHGLPPCAPDLQQEAEQLFLSSPAWLPLHGVEHSARKWQRKTDPWSLLAVLGAPVPSDLQAQRHPTTGQILGYKEVLLENTNLSATTSLSLRRPPGPASQSLWGNPTQYPFWPGGMDEPTITDLNTREEAEEEIDFEKDLLTIPPGFKKGMDFAPKDCPTPAPGLLSLSCMLEPLDLGGGDEDENEAVGQPGGPRGDTVSASPCSAPLARASSLEDLVLKEASTAVSTPEAPEPPSQEQWAIPVDATSPVGDFYRLIPQPAFQWAFEPDVFQKQAILHLERHDSVFVAAHTSAGKTVVAEYAIALAQKHMTRTIYTSPIKALSNQKFRDFRNTFGDVGLLTGDVQLHPEASCLIMTTEILRSMLYSGSDVIRDLEWVIFDEVHYINDVERGVVWEEVLIMLPDHVSIILLSATVPNALEFADWIGRLKRRQIYVISTVTRPVPLEHYLFTGNSSKTQGELFLLLDSRGAFHTKGYYAAVEAKKERMSKHAQTFGAKQPTHQGGPAQDRGVYLSLLASLRTRAQLPVVVFTFSRGRCDEQASGLTSLDLTTSSEKSEIHLFLQRCLARLRGSDRQLPQVLHMSELLNRGLGVHHSGILPILKEIVEMLFSRGLVKVLFATETFAMGVNMPARTVVFDSMRKHDGSTFRDLLPGEYVQMAGRAGRRGLDPTGTVILLCKGRVPEMADLHRMMMGKPSQLQSQFRLTYTMILNLLRVDALRVEDMMKRSFSEFPSRKDSKAHEQALAELTKRLGALEEPDMTGQLVDLPEYYSWGEELTETQHMIQRRIMESVNGLKSLSAGRVVVVKNQEHHNALGVILQVSSNSTSRVFTTLVLCDKPLSQDPQDRGPATAEVPYPDDLVGFKLFLPEGPCDHTVVKLQPGDMAAITTKVLRVNGEKILEDFSKRQQPKFKKDPPLAAVTTAVQELLRLAQAHPAGPPTLDPVNDLQLKDMSVVEGGLRARKLEELIQGAQCVHSPRFPAQYLKLRERMQIQKEMERLRFLLSDQSLLLLPEYHQRVEVLRTLGYVDEAGTVKLAGRVACAMSSHELLLTELMFDNALSTLRPEEIAALLSGLVCQSPGDAGDQLPNTLKQGIERVRAVAKRIGEVQVACGLNQTVEEFVGELNFGLVEVVYEWARGMPFSELAGLSGTPEGLVVRCIQRLAEMCRSLRGAARLVGEPVLGAKMETAATLLRRDIVFAASLYTQ.

The interval 220-246 (LGGGDEDENEAVGQPGGPRGDTVSASP) is disordered. A phosphoserine mark is found at Ser245 and Ser256. Residues 319–475 (ILHLERHDSV…WIGRLKRRQI (157 aa)) form the Helicase ATP-binding domain. Position 332-339 (332-339 (AHTSAGKT)) interacts with ATP. The DEVH box signature appears at 423 to 426 (DEVH). The 171-residue stretch at 585 to 755 (GLTSLDLTTS…LTYTMILNLL (171 aa)) folds into the Helicase C-terminal domain.

The protein belongs to the helicase family. SKI2 subfamily. In terms of assembly, component of the SKI complex which consists of SKIC2, SKIC3 and SKIC8. Interacts with HBS1L isoform 2.

The protein localises to the nucleus. Its subcellular location is the cytoplasm. It carries out the reaction ATP + H2O = ADP + phosphate + H(+). Helicase component of the SKI complex, a multiprotein complex that assists the RNA-degrading exosome during the mRNA decay and quality-control pathways. The SKI complex catalyzes mRNA extraction from 80S ribosomal complexes in the 3'-5' direction and channels mRNA to the cytosolic exosome for degradation. SKI-mediated extraction of mRNA from stalled ribosomes allow binding of the Pelota-HBS1L complex and subsequent ribosome disassembly by ABCE1 for ribosome recycling. In the nucleus, the SKI complex associates with transcriptionally active genes in a manner dependent on PAF1 complex (PAF1C). The protein is Superkiller complex protein 2 of Homo sapiens (Human).